Reading from the N-terminus, the 65-residue chain is Large ribosomal subunit protein bL35 (65 aa).

The interval 1–30 is disordered; the sequence is MPKMKTVSGAAKRFKKTGSGRFKSKQSHLR. The span at 12–30 shows a compositional bias: basic residues; the sequence is KRFKKTGSGRFKSKQSHLR.

Belongs to the bacterial ribosomal protein bL35 family.

This chain is Large ribosomal subunit protein bL35, found in Alteromonas mediterranea (strain DSM 17117 / CIP 110805 / LMG 28347 / Deep ecotype).